Consider the following 687-residue polypeptide: Variant-specific surface protein VSP4A1 (687 aa).

A signal peptide spans 1 to 14 (MLLTAFYVVLGSFA). Residues 15 to 660 (APCQQDGDHI…SGLSTGAIAG (646 aa)) are Extracellular-facing. A helical membrane pass occupies residues 661–681 (ISVAAIVVVGGLVGFLCWWFI). At 682 to 687 (CRGKAQ) the chain is on the cytoplasmic side.

This sequence belongs to the Giardia variant surface protein family. Post-translationally, O-glycosylated. The major glycan is a trisaccharide with Glc at the reducing terminus. Palmitoylated.

The protein localises to the cell membrane. The protein is Variant-specific surface protein VSP4A1 of Giardia intestinalis (Giardia lamblia).